A 173-amino-acid chain; its full sequence is Small ribosomal subunit protein uS13 (173 aa).

Basic residues predominate over residues 130-143 (GVRHKRGQKVRGQR). Positions 130–155 (GVRHKRGQKVRGQRTKSTGRTEGTIG) are disordered.

It belongs to the universal ribosomal protein uS13 family. In terms of assembly, part of the 30S ribosomal subunit. Forms a loose heterodimer with protein S19. Forms two bridges to the 50S subunit in the 70S ribosome.

Functionally, located at the top of the head of the 30S subunit, it contacts several helices of the 16S rRNA. In the 70S ribosome it contacts the 23S rRNA (bridge B1a) and protein L5 of the 50S subunit (bridge B1b), connecting the 2 subunits; these bridges are implicated in subunit movement. The sequence is that of Small ribosomal subunit protein uS13 from Haloquadratum walsbyi (strain DSM 16790 / HBSQ001).